A 356-amino-acid chain; its full sequence is GATA zinc finger domain-containing protein 17 (356 aa).

Residues 91 to 119 (LKEFDALEASLNAELECLELQYSSDTSEL) adopt a coiled-coil conformation. Residues 158 to 188 (TASTSTSTPTNTTTTTTTTSNSLTKNNNSAL) show a composition bias toward low complexity. Residues 158–294 (TASTSTSTPT…DITEESKVKE (137 aa)) form a disordered region. Over residues 206 to 228 (SSDDEEDDQKDDQDKDDSDEDNV) the composition is skewed to acidic residues. Residues 260 to 284 (TAITTTTTPITTTDSNIIGTTTTTD) are compositionally biased toward low complexity. The segment at 304–331 (CYVCKVTETPYWRRGTDNGVVVDLCNEC) adopts a GATA-type zinc-finger fold.

The protein is GATA zinc finger domain-containing protein 17 (gtaQ) of Dictyostelium discoideum (Social amoeba).